The chain runs to 259 residues: Ras-related protein Rab-34 (259 aa).

Met1 carries the post-translational modification N-acetylmethionine. GTP is bound by residues Ser62, Val63, Gly64, Lys65, Thr66, Asp78, Tyr81, and Thr84. Thr66 is a Mg(2+) binding site. Residues 71-89 (RFCKDTFDKNYKATIGVDF) carry the Switch 1 motif. Positions 84 and 107 each coordinate Mg(2+). The short motif at 108–127 (TAGQERFKCIASTYYRGAQA) is the Switch 2 element. 4 residues coordinate GTP: Gly110, Lys167, Asp169, and Ser198. A phosphoserine mark is found at Ser241 and Ser244. S-geranylgeranyl cysteine attachment occurs at residues Cys257 and Cys258.

It belongs to the small GTPase superfamily. Rab family. Interacts with RILP. The GTP-bound form interacts with REP15. Requires Mg(2+) as cofactor.

The protein resides in the cytoplasm. Its subcellular location is the golgi apparatus. It is found in the cytoplasmic vesicle. It localises to the phagosome. The protein localises to the phagosome membrane. The protein resides in the cell projection. Its subcellular location is the cilium. It is found in the cytoskeleton. It localises to the microtubule organizing center. The protein localises to the centrosome. The protein resides in the centriole. It carries out the reaction GTP + H2O = GDP + phosphate + H(+). Its activity is regulated as follows. Regulated by guanine nucleotide exchange factors (GEFs) which promote the exchange of bound GDP for free GTP. Regulated by GTPase activating proteins (GAPs) which increase the GTP hydrolysis activity. Inhibited by GDP dissociation inhibitors (GDIs). Functionally, the small GTPases Rab are key regulators of intracellular membrane trafficking, from the formation of transport vesicles to their fusion with membranes. Rabs cycle between an inactive GDP-bound form and an active GTP-bound form that is able to recruit to membranes different sets of downstream effectors directly responsible for vesicle formation, movement, tethering and fusion. RAB34 transports protein involved in the redistribution of lysosomes to the peri-Golgi region. Plays a role in the maturation of phagosomes that engulf pathogens, such as S.aureus and M.tuberculosis. Plays a role in the fusion of phagosomes with lysosomes. Involved in ciliogenesis. In particular, it is required for early steps of the intracellular cilium assembly pathway initiated by trafficking and docking of ciliary vesicles to the centrioles in the cytoplasm, followed by axoneme formation in the cytoplasm. After axoneme elongation, the centrioles migrate close to the cell surface so that ciliary vesicles can fuse with the plasma membrane to expose cilia to the extracellular space. It seems dispensable for ciliogenesis via the extracellular pathway where cilium assembly begins after migration and docking of the centriole to the plasma membrane. Also acts as a positive regulator of hedgehog signaling and regulates ciliary function. The chain is Ras-related protein Rab-34 from Homo sapiens (Human).